An 83-amino-acid polypeptide reads, in one-letter code: Small ribosomal subunit protein bS16 (83 aa).

It belongs to the bacterial ribosomal protein bS16 family.

The sequence is that of Small ribosomal subunit protein bS16 from Stutzerimonas stutzeri (strain A1501) (Pseudomonas stutzeri).